The primary structure comprises 101 residues: Small ribosomal subunit protein uS14 (101 aa).

This sequence belongs to the universal ribosomal protein uS14 family. Part of the 30S ribosomal subunit. Contacts proteins S3 and S10.

Functionally, binds 16S rRNA, required for the assembly of 30S particles and may also be responsible for determining the conformation of the 16S rRNA at the A site. The sequence is that of Small ribosomal subunit protein uS14 from Ruegeria pomeroyi (strain ATCC 700808 / DSM 15171 / DSS-3) (Silicibacter pomeroyi).